The primary structure comprises 486 residues: Fructose dehydrogenase cytochrome subunit (486 aa).

The N-terminal stretch at 1–25 (MRYFRPLSATAMTTVLLLAGTNVRA) is a signal peptide. Cytochrome c domains are found at residues 38-142 (PSIS…MTEV), 186-294 (DDWN…RSVP), and 330-423 (TKTT…LSHF). Residues cysteine 52, cysteine 55, histidine 56, cysteine 201, cysteine 204, histidine 205, cysteine 343, cysteine 346, and histidine 347 each coordinate heme c. Residues 458–478 (LLGTGGILGAILVVAGLWWLI) form a helical membrane-spanning segment.

As to quaternary structure, heterotrimer composed of FdhL, FdhS and FdhC. Binds 3 heme c groups covalently per subunit.

The protein resides in the cell membrane. Cytochrome subunit of fructose dehydrogenase, an enzyme that catalyzes the oxidation of D-fructose to produce 5-keto-D-fructose. In the complex, mediates both the electron transfer to ubiquinone and the anchoring of the complex to the membrane. The sequence is that of Fructose dehydrogenase cytochrome subunit (fdhC) from Gluconobacter japonicus.